Consider the following 25-residue polypeptide: Small ribosomal subunit protein eS32 (25 aa).

Residues 1 to 25 (MRDKWRKKRVRRLKRKRRKVRARSK) are disordered.

Belongs to the eukaryotic ribosomal protein eS32 family. Component of the small ribosomal subunit. Mature ribosomes consist of a small (40S) and a large (60S) subunit. The 40S subunit contains about 32 different proteins and 1 molecule of RNA (18S). The 60S subunit contains 45 different proteins and 3 molecules of RNA (25S, 5.8S and 5S).

The protein resides in the cytoplasm. Its function is as follows. Component of the ribosome, a large ribonucleoprotein complex responsible for the synthesis of proteins in the cell. The small ribosomal subunit (SSU) binds messenger RNAs (mRNAs) and translates the encoded message by selecting cognate aminoacyl-transfer RNA (tRNA) molecules. The large subunit (LSU) contains the ribosomal catalytic site termed the peptidyl transferase center (PTC), which catalyzes the formation of peptide bonds, thereby polymerizing the amino acids delivered by tRNAs into a polypeptide chain. The nascent polypeptides leave the ribosome through a tunnel in the LSU and interact with protein factors that function in enzymatic processing, targeting, and the membrane insertion of nascent chains at the exit of the ribosomal tunnel. This chain is Small ribosomal subunit protein eS32, found in Candida albicans (strain SC5314 / ATCC MYA-2876) (Yeast).